The following is an 877-amino-acid chain: Dynamin (877 aa).

Positions 23–289 constitute a Dynamin-type G domain; sequence QLDLPQIAVV…LTNHIRDTLP (267 aa). The tract at residues 33–40 is G1 motif; that stretch reads GGQSAGKS. 33 to 41 is a GTP binding site; sequence GGQSAGKSS. The interval 59–61 is G2 motif; sequence VTR. Residues 131 to 134 form a G3 motif region; the sequence is DLPG. Residues 200-203 form a G4 motif region; the sequence is TKLD. GTP-binding positions include 200 to 206 and 231 to 234; these read TKLDLMD and NRSQ. A G5 motif region spans residues 230 to 233; sequence VNRS. One can recognise a PH domain in the interval 513–621; the sequence is QVIRKGHMVI…WKASFLRAGV (109 aa). Disordered regions lie at residues 623–648 and 740–834; these read PEKQ…QLER and TVSS…SGAV. Over residues 630-641 the composition is skewed to acidic residues; the sequence is ENGDESASEESS. The GED domain occupies 650-741; that stretch reads VETIRNLVDS…IIGDVSMATV (92 aa). Residues S756, S764, and S767 each carry the phosphoserine modification. Positions 788-826 are enriched in pro residues; that stretch reads PPLPPSTGRPAPAIPNRPGGGAPPLPGGRPGGSLPPPML.

The protein belongs to the TRAFAC class dynamin-like GTPase superfamily. Dynamin/Fzo/YdjA family.

It localises to the cytoplasm. The protein localises to the cytoskeleton. It catalyses the reaction GTP + H2O = GDP + phosphate + H(+). Functionally, microtubule-associated force-producing protein which is involved in the production of microtubule bundles and which is able to bind and hydrolyze GTP. Implicated in endocytic protein sorting. In Drosophila melanogaster (Fruit fly), this protein is Dynamin (shi).